Consider the following 211-residue polypeptide: uncharacterized protein (211 aa).

This is an uncharacterized protein from Homo sapiens (Human).